A 122-amino-acid polypeptide reads, in one-letter code: Large ribosomal subunit protein uL14 (122 aa).

Belongs to the universal ribosomal protein uL14 family. Part of the 50S ribosomal subunit. Forms a cluster with proteins L3 and L19. In the 70S ribosome, L14 and L19 interact and together make contacts with the 16S rRNA in bridges B5 and B8.

Its function is as follows. Binds to 23S rRNA. Forms part of two intersubunit bridges in the 70S ribosome. The sequence is that of Large ribosomal subunit protein uL14 from Xylella fastidiosa (strain M23).